A 944-amino-acid chain; its full sequence is Bifunctional glutamine synthetase adenylyltransferase/adenylyl-removing enzyme (944 aa).

The tract at residues 1-440 (MSANSVFQQL…IFTQLIGEDD (440 aa)) is adenylyl removase. An adenylyl transferase region spans residues 448–944 (VSEFKRLWLL…LSSKQKWLDE (497 aa)).

The protein belongs to the GlnE family. The cofactor is Mg(2+).

The catalysed reaction is [glutamine synthetase]-O(4)-(5'-adenylyl)-L-tyrosine + phosphate = [glutamine synthetase]-L-tyrosine + ADP. It carries out the reaction [glutamine synthetase]-L-tyrosine + ATP = [glutamine synthetase]-O(4)-(5'-adenylyl)-L-tyrosine + diphosphate. Functionally, involved in the regulation of glutamine synthetase GlnA, a key enzyme in the process to assimilate ammonia. When cellular nitrogen levels are high, the C-terminal adenylyl transferase (AT) inactivates GlnA by covalent transfer of an adenylyl group from ATP to specific tyrosine residue of GlnA, thus reducing its activity. Conversely, when nitrogen levels are low, the N-terminal adenylyl removase (AR) activates GlnA by removing the adenylyl group by phosphorolysis, increasing its activity. The regulatory region of GlnE binds the signal transduction protein PII (GlnB) which indicates the nitrogen status of the cell. This chain is Bifunctional glutamine synthetase adenylyltransferase/adenylyl-removing enzyme, found in Proteus mirabilis (strain HI4320).